Reading from the N-terminus, the 291-residue chain is ATP synthase gamma chain (291 aa).

Belongs to the ATPase gamma chain family. As to quaternary structure, F-type ATPases have 2 components, CF(1) - the catalytic core - and CF(0) - the membrane proton channel. CF(1) has five subunits: alpha(3), beta(3), gamma(1), delta(1), epsilon(1). CF(0) has three main subunits: a, b and c.

The protein localises to the cell inner membrane. Produces ATP from ADP in the presence of a proton gradient across the membrane. The gamma chain is believed to be important in regulating ATPase activity and the flow of protons through the CF(0) complex. This is ATP synthase gamma chain from Neisseria meningitidis serogroup B (strain ATCC BAA-335 / MC58).